The chain runs to 31 residues: PTEN upstream open reading frame MP31 (31 aa).

Interacts with lactate dehydrogenases LDHA and LDHB; interaction with mitochondrial LDH leads to inhibition of lactate dehydrogenase activity, preventing conversion of lactate to pyruvate. As to expression, expressed in brain (at protein level). Expressed at lower levels in glioblastomas than in normal brain tissue (at protein level).

It localises to the mitochondrion. Its function is as follows. Inhibits lactate dehydrogenase (LDH)-mediated conversion of lactate to pyruvate in mitochondria by competing with mitochondrial LDH for binding to NAD(+). Also inhibits cellular lactate utilization. This is PTEN upstream open reading frame MP31 from Homo sapiens (Human).